The chain runs to 364 residues: UDP-N-acetylglucosamine--N-acetylmuramyl-(pentapeptide) pyrophosphoryl-undecaprenol N-acetylglucosamine transferase (364 aa).

UDP-N-acetyl-alpha-D-glucosamine is bound by residues 10–12, Asn124, Arg165, Ser193, Ile248, and Gln293; that span reads TGG.

The protein belongs to the glycosyltransferase 28 family. MurG subfamily.

It localises to the cell inner membrane. It carries out the reaction di-trans,octa-cis-undecaprenyl diphospho-N-acetyl-alpha-D-muramoyl-L-alanyl-D-glutamyl-meso-2,6-diaminopimeloyl-D-alanyl-D-alanine + UDP-N-acetyl-alpha-D-glucosamine = di-trans,octa-cis-undecaprenyl diphospho-[N-acetyl-alpha-D-glucosaminyl-(1-&gt;4)]-N-acetyl-alpha-D-muramoyl-L-alanyl-D-glutamyl-meso-2,6-diaminopimeloyl-D-alanyl-D-alanine + UDP + H(+). It participates in cell wall biogenesis; peptidoglycan biosynthesis. Functionally, cell wall formation. Catalyzes the transfer of a GlcNAc subunit on undecaprenyl-pyrophosphoryl-MurNAc-pentapeptide (lipid intermediate I) to form undecaprenyl-pyrophosphoryl-MurNAc-(pentapeptide)GlcNAc (lipid intermediate II). The chain is UDP-N-acetylglucosamine--N-acetylmuramyl-(pentapeptide) pyrophosphoryl-undecaprenol N-acetylglucosamine transferase from Geobacter sulfurreducens (strain ATCC 51573 / DSM 12127 / PCA).